The sequence spans 654 residues: Fructose-1,6-bisphosphatase class 3 (654 aa).

The protein belongs to the FBPase class 3 family. Mn(2+) serves as cofactor.

The enzyme catalyses beta-D-fructose 1,6-bisphosphate + H2O = beta-D-fructose 6-phosphate + phosphate. Its pathway is carbohydrate biosynthesis; gluconeogenesis. The chain is Fructose-1,6-bisphosphatase class 3 from Staphylococcus epidermidis (strain ATCC 35984 / DSM 28319 / BCRC 17069 / CCUG 31568 / BM 3577 / RP62A).